The primary structure comprises 476 residues: Ribulose bisphosphate carboxylase large chain (476 aa).

A propeptide spanning residues Met1 to Ser2 is cleaved from the precursor. An N-acetylproline modification is found at Pro3. Lys14 is modified (N6,N6,N6-trimethyllysine). Substrate contacts are provided by Asn123 and Thr173. Lys175 serves as the catalytic Proton acceptor. Lys177 is a binding site for substrate. Mg(2+) contacts are provided by Lys201, Asp203, and Glu204. Lys201 is subject to N6-carboxylysine. 3 residues coordinate substrate: Arg295, His327, and Ser379.

The protein belongs to the RuBisCO large chain family. Type I subfamily. In terms of assembly, heterohexadecamer of 8 large chains and 8 small chains; disulfide-linked. The disulfide link is formed within the large subunit homodimers. Requires Mg(2+) as cofactor. The disulfide bond which can form in the large chain dimeric partners within the hexadecamer appears to be associated with oxidative stress and protein turnover.

The protein resides in the plastid. Its subcellular location is the chloroplast. It carries out the reaction 2 (2R)-3-phosphoglycerate + 2 H(+) = D-ribulose 1,5-bisphosphate + CO2 + H2O. The catalysed reaction is D-ribulose 1,5-bisphosphate + O2 = 2-phosphoglycolate + (2R)-3-phosphoglycerate + 2 H(+). In terms of biological role, ruBisCO catalyzes two reactions: the carboxylation of D-ribulose 1,5-bisphosphate, the primary event in carbon dioxide fixation, as well as the oxidative fragmentation of the pentose substrate in the photorespiration process. Both reactions occur simultaneously and in competition at the same active site. This chain is Ribulose bisphosphate carboxylase large chain, found in Barnadesia caryophylla (Xenophontia caryophylla).